We begin with the raw amino-acid sequence, 720 residues long: Heat shock protein homolog pss1 (720 aa).

Ser38 carries the post-translational modification Phosphoserine. Thr39 is subject to Phosphothreonine. The span at 658 to 690 (KRQKVQAEREAAKAATKSEAEKQKPSGKFEEGT) shows a compositional bias: basic and acidic residues. Residues 658 to 720 (KRQKVQAERE…ETMEIDEQKE (63 aa)) are disordered. Residues 703–720 (VAPENEEVETMEIDEQKE) are compositionally biased toward acidic residues.

The protein belongs to the heat shock protein 70 family.

It localises to the cytoplasm. Functionally, required for normal growth at various temperatures. In Schizosaccharomyces pombe (strain 972 / ATCC 24843) (Fission yeast), this protein is Heat shock protein homolog pss1 (pss1).